Reading from the N-terminus, the 587-residue chain is Glucosylglycerate phosphorylase (587 aa).

Residue Asp236 is the Nucleophile of the active site.

It belongs to the glycosyl hydrolase 13 family. Glucosylglycerate phosphorylase subfamily.

The catalysed reaction is (2R)-2-O-(alpha-D-glucopyranosyl)-glycerate + phosphate = (R)-glycerate + alpha-D-glucose 1-phosphate. Catalyzes the reversible phosphorolysis of glucosylglycerate into alpha-D-glucose 1-phosphate (Glc1P) and D-glycerate. May be a regulator of intracellular levels of glucosylglycerate, a compatible solute that primarily protects organisms facing salt stress and very specific nutritional constraints. Cannot catalyze the phosphorolysis of sucrose. This is Glucosylglycerate phosphorylase from Spirochaeta thermophila (strain ATCC 700085 / DSM 6578 / Z-1203).